The sequence spans 1083 residues: Ubiquitin carboxyl-terminal hydrolase 28 (1083 aa).

A disordered region spans residues 60–82; the sequence is DQRVKEPSHDTAATEPSEVEESA. Serine 67 bears the Phosphoserine mark. One can recognise a UIM domain in the interval 97-116; that stretch reads DNKDDLQAAIALSLLESPNI. Lysine 99 participates in a covalent cross-link: Glycyl lysine isopeptide (Lys-Gly) (interchain with G-Cter in SUMO2). The USP domain maps to 162-656; sequence VGLKNVGNTC…SAYCLMYIND (495 aa). Cysteine 171 serves as the catalytic Nucleophile. Serine 376 is subject to Phosphoserine. The segment at 483–539 is disordered; it reads DLTAKESSSPKSCSQNAEGSFSSPEDALPNSEVMNGPFTSPHSSLEMPAPPPAPRTV. Residues 487 to 505 are compositionally biased toward polar residues; the sequence is KESSSPKSCSQNAEGSFSS. Serine 556 is subject to Phosphoserine. The active-site Proton acceptor is histidine 606. The interval 703–728 is disordered; it reads EEQSCKIPQMESSPNSSSQDFSTSQE. Residues 714-728 show a composition bias toward low complexity; that stretch reads SSPNSSSQDFSTSQE. A Phosphoserine modification is found at serine 720. At threonine 1054 the chain carries Phosphothreonine.

The protein belongs to the peptidase C19 family. USP28 subfamily. Interacts with ZNF304. Interacts with PRKD1. Interacts with TP53BP1. Interacts with FBXW7; following DNA damage, dissociates from FBXW7 leading to degradation of MYC. Degraded upon nickel ion level or hypoxia exposure. In terms of processing, phosphorylated upon DNA damage at Ser-67 and Ser-720, by ATM or ATR. Phosphorylated by PRKD1.

It is found in the nucleus. The protein localises to the nucleoplasm. The catalysed reaction is Thiol-dependent hydrolysis of ester, thioester, amide, peptide and isopeptide bonds formed by the C-terminal Gly of ubiquitin (a 76-residue protein attached to proteins as an intracellular targeting signal).. In terms of biological role, deubiquitinase involved in DNA damage response checkpoint and MYC proto-oncogene stability. Involved in DNA damage induced apoptosis by specifically deubiquitinating proteins of the DNA damage pathway such as CLSPN. Also involved in G2 DNA damage checkpoint, by deubiquitinating CLSPN, and preventing its degradation by the anaphase promoting complex/cyclosome (APC/C). In contrast, it does not deubiquitinate PLK1. Specifically deubiquitinates MYC in the nucleoplasm, leading to prevent MYC degradation by the proteasome: acts by specifically interacting with FBXW7 (FBW7alpha) in the nucleoplasm and counteracting ubiquitination of MYC by the SCF(FBXW7) complex. Deubiquitinates ZNF304, hence preventing ZNF304 degradation by the proteasome and leading to the activated KRAS-mediated promoter hypermethylation and transcriptional silencing of tumor suppressor genes (TSGs) in a subset of colorectal cancers (CRC) cells. This chain is Ubiquitin carboxyl-terminal hydrolase 28 (Usp28), found in Rattus norvegicus (Rat).